Reading from the N-terminus, the 71-residue chain is Exodeoxyribonuclease 7 small subunit (71 aa).

The protein belongs to the XseB family. Heterooligomer composed of large and small subunits.

Its subcellular location is the cytoplasm. The enzyme catalyses Exonucleolytic cleavage in either 5'- to 3'- or 3'- to 5'-direction to yield nucleoside 5'-phosphates.. Bidirectionally degrades single-stranded DNA into large acid-insoluble oligonucleotides, which are then degraded further into small acid-soluble oligonucleotides. The polypeptide is Exodeoxyribonuclease 7 small subunit (Streptococcus equi subsp. zooepidemicus (strain H70)).